The following is a 424-amino-acid chain: CinA-like protein (424 aa).

It belongs to the CinA family.

The chain is CinA-like protein from Shewanella woodyi (strain ATCC 51908 / MS32).